A 243-amino-acid polypeptide reads, in one-letter code: Venom peptide isomerase heavy chain (243 aa).

Residues 1–243 (IVGGKTAKFG…YTNWMSKNMV (243 aa)) form the Peptidase S1 domain. Cys31 and Cys47 are disulfide-bonded. Residues His46 and Asp96 each act as charge relay system in the active site. The N-linked (GlcNAc...) asparagine glycan is linked to Asn127. Disulfide bonds link Cys159/Cys181 and Cys190/Cys219. The active-site Charge relay system is Ser194.

The protein belongs to the peptidase S1 family. Heterodimer with venom peptide isomerase light chain; disulfide-linked. In terms of processing, N-linked glycan at Asn-127 consists of Man3-GlcNAc2-Fuc. As to expression, expressed by the venom gland.

Its subcellular location is the secreted. Functionally, peptide isomerase that inverts the chirality at the Ser-81 of omega-Aga IVB. Acts cofactor-independently. This Agelenopsis aperta (North American funnel-web spider) protein is Venom peptide isomerase heavy chain.